The primary structure comprises 346 residues: Protein MelA (346 aa).

VOC domains lie at 12–141 and 155–305; these read GIEF…DFEA and EVDH…IFTK. Fe cation is bound by residues His-158, His-237, and Glu-314.

Belongs to the 4HPPD family. It depends on Fe cation as a cofactor.

It localises to the cytoplasm. The protein operates within pigment biosynthesis; melanin biosynthesis. The polypeptide is Protein MelA (melA) (Shewanella colwelliana (Alteromonas colwelliana)).